The sequence spans 2376 residues: Serine/threonine-protein kinase WNK1 (2376 aa).

Disordered stretches follow at residues 1 to 78 (MSGG…EHRF) and 93 to 201 (ELPG…QQDD). Low complexity-rich tracts occupy residues 10–19 (SSPPGSLFLS) and 40–49 (GAAAADAGAG). A phosphoserine mark is found at serine 15 and serine 19. The span at 50–66 (RTEEYRRRRHTMDKDSR) shows a compositional bias: basic and acidic residues. Threonine 60 carries the phosphothreonine modification. Over residues 125 to 158 (TPAVAHVAQQPPAAATPGEPAAAVPAAASAPGSA) the composition is skewed to low complexity. At serine 172 the chain carries Phosphoserine. Residues 219–477 (LKFDIEIGRG…IKDLLNHAFF (259 aa)) form the Protein kinase domain. Residue serine 229 participates in ATP binding. Phenylalanine 281 and leucine 297 together coordinate chloride. ATP is bound by residues 299–302 (TELM) and lysine 349. Aspartate 366 functions as the Proton acceptor in the catalytic mechanism. Positions 367 and 369 each coordinate chloride. 2 positions are modified to phosphoserine; by autocatalysis: serine 376 and serine 380. Residues 486-553 (ELAEEDDGEK…VCEGDHKTMA (68 aa)) form an autoinhibitory domain region. Residues 571 to 586 (QLVREEQEKRKQEESS) show a composition bias toward basic and acidic residues. Disordered stretches follow at residues 571 to 641 (QLVR…QLQY), 701 to 799 (AQPH…PVPT), and 1026 to 1118 (TTSS…SRPK). Low complexity-rich tracts occupy residues 587–601 (LKQQ…SQAG) and 614–624 (AAATTSASVST). Residues 627-637 (EPEEPEADQHQ) form an interaction with KLHL3 region. Residues 708–752 (PPSSMAQGQSQGQPSSSSLTGIPSSQPVQHSQQQQGVQQTAPSQQ) show a composition bias toward low complexity. Positions 753–766 (TVQYSLPQTSAPSE) are enriched in polar residues. Residues 1045–1057 (PPEPVPAAPPQPT) are compositionally biased toward pro residues. Positions 1079-1089 (SDGNENVPSSS) are enriched in polar residues. Positions 1097 to 1118 (IKRHYRKSVRSRSRHEKTSRPK) are enriched in basic residues. The RFXV motif 1 motif lies at 1257 to 1260 (RFIV). Serine 1261 carries the post-translational modification Phosphoserine. 2 disordered regions span residues 1459–1478 (STAA…VSGS) and 1734–1770 (STIP…PPSE). A compositionally biased stretch (pro residues) spans 1746–1756 (SKPPSTKPPVL). Residues 1853–1856 (RFQV) carry the RFXV motif 2 motif. Residues 1862–1878 (DTQKEGKNKSEDVKSVH) show a composition bias toward basic and acidic residues. The interval 1862-1942 (DTQKEGKNKS…QPTKVGRFQV (81 aa)) is disordered. A compositionally biased stretch (low complexity) spans 1881-1899 (SSTSESSVLSSSSPESTLV). 2 short sequence motifs (RFXV motif) span residues 1939–1942 (RFQV) and 1951–1954 (RFSV). 7 positions are modified to phosphoserine: serine 1972, serine 1996, serine 2005, serine 2006, serine 2021, serine 2023, and serine 2026. Disordered stretches follow at residues 1991–2033 (EKPE…LCSK) and 2110–2239 (AAAP…RKGT). Basic residues predominate over residues 2116–2128 (GRRRRPTKSKGSK). A compositionally biased stretch (low complexity) spans 2129 to 2141 (SSRSSSLGNKSPG). 2 stretches are compositionally biased toward polar residues: residues 2146–2161 (LSGQ…QQTL) and 2169–2193 (ETGQ…SAFT). Low complexity predominate over residues 2207-2223 (GQGTSSTNTVGGTVSSQ). A compositionally biased stretch (polar residues) spans 2224–2238 (AAQAQPPTMTSSRKG). The amphipathic alpha-helix stretch occupies residues 2235 to 2255 (SRKGTFTDDLHKLVDNWARDA). Serine 2264, serine 2280, serine 2364, and serine 2366 each carry phosphoserine.

The protein belongs to the protein kinase superfamily. Ser/Thr protein kinase family. WNK subfamily. In terms of assembly, interacts with WNK3. Interacts with WNK4; inhibiting the activity of WNK4. Interacts with SGK1; promoting its activation. Associates with the mTORC2 complex. Interacts with UVRAG. Interacts (via amphipathic alpha-helix region) with EMC2; promoting the ER membrane protein complex assembly. It depends on Mg(2+) as a cofactor. Autophosphorylated at Ser-376 and Ser-380, promoting its activity. Autophosphorylation at Ser-380 is inhibited by intracellular calcium. Phosphorylation at Thr-60 increases ability to activate SGK1. In terms of processing, ubiquitinated by the BCR(KLHL3) complex, leading to its degradation. Also ubiquitinated by the BCR(KLHL2) complex.

Its subcellular location is the cytoplasm. It localises to the nucleus. It is found in the cytoskeleton. The protein localises to the spindle. The enzyme catalyses L-seryl-[protein] + ATP = O-phospho-L-seryl-[protein] + ADP + H(+). It catalyses the reaction L-threonyl-[protein] + ATP = O-phospho-L-threonyl-[protein] + ADP + H(+). With respect to regulation, activated in response to hyperosmotic stress: cell shrinkage promotes formation of a membraneless compartment that concentrates WNK1 with its substrates, OXSR1/OSR1 and STK39/SPAK. Activation requires autophosphorylation of Ser-380 and, to a lower extent, Ser-376. Autophosphorylation and subsequent activation is inhibited by increases in intracellular ionic strength: Cl(-) potently inhibits WNK1 kinase activity via direct binding. Also inhibited by K(+) ions. Serine/threonine-protein kinase component of the WNK1-SPAK/OSR1 kinase cascade, which acts as a key regulator of blood pressure and regulatory volume increase by promoting ion influx. WNK1 mediates regulatory volume increase in response to hyperosmotic stress by acting as a molecular crowding sensor, which senses cell shrinkage and mediates formation of a membraneless compartment by undergoing liquid-liquid phase separation. The membraneless compartment concentrates WNK1 with its substrates, OXSR1/OSR1 and STK39/SPAK, promoting WNK1-dependent phosphorylation and activation of downstream kinases OXSR1/OSR1 and STK39/SPAK. Following activation, OXSR1/OSR1 and STK39/SPAK catalyze phosphorylation of ion cotransporters SLC12A1/NKCC2, SLC12A2/NKCC1, SLC12A5/KCC2 and SLC12A6/KCC3, regulating their activity. Phosphorylation of Na-K-Cl cotransporters SLC12A2/NKCC1 and SLC12A2/NKCC1 promote their activation and ion influx; simultaneously, phosphorylation of K-Cl cotransporters SLC12A5/KCC2 and SLC12A6/KCC3 inhibit their activity, blocking ion efflux. Also acts as a regulator of angiogenesis in endothelial cells via activation of OXSR1/OSR1 and STK39/SPAK: activation of OXSR1/OSR1 regulates chemotaxis and invasion, while STK39/SPAK regulates endothelial cell proliferation. Also acts independently of the WNK1-SPAK/OSR1 kinase cascade by catalyzing phosphorylation of other substrates, such as SYT2, PCF11 and NEDD4L. Mediates phosphorylation of SYT2, regulating SYT2 association with phospholipids and membrane-binding. Regulates mRNA export in the nucleus by mediating phosphorylation of PCF11, thereby decreasing the association between PCF11 and POLR2A/RNA polymerase II and promoting mRNA export to the cytoplasm. Acts as a negative regulator of autophagy. Required for the abscission step during mitosis, independently of the WNK1-SPAK/OSR1 kinase cascade. May also play a role in actin cytoskeletal reorganization. Also acts as a scaffold protein independently of its protein kinase activity: negatively regulates cell membrane localization of various transporters and channels, such as SLC4A4, SLC26A6, SLC26A9, TRPV4 and CFTR. Involved in the regulation of epithelial Na(+) channel (ENaC) by promoting activation of SGK1 in a kinase-independent manner: probably acts as a scaffold protein that promotes the recruitment of SGK1 to the mTORC2 complex in response to chloride, leading to mTORC2-dependent phosphorylation and activation of SGK1. Acts as an assembly factor for the ER membrane protein complex independently of its protein kinase activity: associates with EMC2 in the cytoplasm via its amphipathic alpha-helix, and prevents EMC2 ubiquitination and subsequent degradation, thereby promoting EMC2 stabilization. The chain is Serine/threonine-protein kinase WNK1 from Sus scrofa (Pig).